Reading from the N-terminus, the 129-residue chain is Glycine cleavage system H protein (129 aa).

One can recognise a Lipoyl-binding domain in the interval 23–104 (TVTVGITQHA…SYSAWLFKLK (82 aa)). Lys64 bears the N6-lipoyllysine mark.

It belongs to the GcvH family. As to quaternary structure, the glycine cleavage system is composed of four proteins: P, T, L and H. (R)-lipoate serves as cofactor.

Functionally, the glycine cleavage system catalyzes the degradation of glycine. The H protein shuttles the methylamine group of glycine from the P protein to the T protein. The protein is Glycine cleavage system H protein of Nitrosomonas eutropha (strain DSM 101675 / C91 / Nm57).